The primary structure comprises 204 residues: Ras-related and estrogen-regulated growth inhibitor-like protein (204 aa).

The segment at 1–204 (MNDVKLTVLG…NVFGKRRKSV (204 aa)) is small GTPase-like. GTP-binding positions include 10–17 (GGEGTGKS), 57–63 (DPCSQPQ), and 122–125 (NKQD).

The protein belongs to the small GTPase superfamily. Ras family.

The catalysed reaction is GTP + H2O = GDP + phosphate + H(+). Its function is as follows. Binds GDP/GTP and may possess intrinsic GTPase activity. In Bos taurus (Bovine), this protein is Ras-related and estrogen-regulated growth inhibitor-like protein (RERGL).